A 336-amino-acid chain; its full sequence is DNA-directed RNA polymerase subunit alpha (336 aa).

Positions 1 to 232 (MIQKNWQELI…DQLGVFVNFD (232 aa)) are alpha N-terminal domain (alpha-NTD). An alpha C-terminal domain (alpha-CTD) region spans residues 248–336 (FNPALLKKVD…DLAKRYEDQY (89 aa)).

This sequence belongs to the RNA polymerase alpha chain family. As to quaternary structure, homodimer. The RNAP catalytic core consists of 2 alpha, 1 beta, 1 beta' and 1 omega subunit. When a sigma factor is associated with the core the holoenzyme is formed, which can initiate transcription.

The catalysed reaction is RNA(n) + a ribonucleoside 5'-triphosphate = RNA(n+1) + diphosphate. Its function is as follows. DNA-dependent RNA polymerase catalyzes the transcription of DNA into RNA using the four ribonucleoside triphosphates as substrates. The sequence is that of DNA-directed RNA polymerase subunit alpha from Rhizobium rhizogenes (strain K84 / ATCC BAA-868) (Agrobacterium radiobacter).